The sequence spans 361 residues: MSKTLLVMAGGTGGHVFPGLAVADRLKAQGWTIHWLGTADRMEAELVPAHGYPISFIDIQGVRGNGIKRLLVAPYRIVKSVLQARRVLKTIRPDVVLGMGGFASGPGGVAAWLSGIPLLLHEQNAAAGLTNKLLARLAKRVLMAFPGAFAPSRRTAVVGNPVRPEVVALPDPQLRSGAEPLRLLIVGGSLGARVLNEQVPPAVAAAGVPIEVRHQCGKGNRDAVAEAYAKQGVAAEVSEFIKDMAGAYAWADLVVCRAGALTVSEVAAAGVAAIFVPLPHAVDDHQTRNALTLVDGGAAEFLPQSELTTASLAARLSWLAGRRETLLNMAQAARRVAITDAAERVADECKRLATGQIEREL.

Residues 12 to 14, N124, R163, S189, I241, 260 to 265, and Q286 contribute to the UDP-N-acetyl-alpha-D-glucosamine site; these read TGG and ALTVSE.

It belongs to the glycosyltransferase 28 family. MurG subfamily.

The protein resides in the cell inner membrane. It catalyses the reaction di-trans,octa-cis-undecaprenyl diphospho-N-acetyl-alpha-D-muramoyl-L-alanyl-D-glutamyl-meso-2,6-diaminopimeloyl-D-alanyl-D-alanine + UDP-N-acetyl-alpha-D-glucosamine = di-trans,octa-cis-undecaprenyl diphospho-[N-acetyl-alpha-D-glucosaminyl-(1-&gt;4)]-N-acetyl-alpha-D-muramoyl-L-alanyl-D-glutamyl-meso-2,6-diaminopimeloyl-D-alanyl-D-alanine + UDP + H(+). The protein operates within cell wall biogenesis; peptidoglycan biosynthesis. Functionally, cell wall formation. Catalyzes the transfer of a GlcNAc subunit on undecaprenyl-pyrophosphoryl-MurNAc-pentapeptide (lipid intermediate I) to form undecaprenyl-pyrophosphoryl-MurNAc-(pentapeptide)GlcNAc (lipid intermediate II). The polypeptide is UDP-N-acetylglucosamine--N-acetylmuramyl-(pentapeptide) pyrophosphoryl-undecaprenol N-acetylglucosamine transferase (Aeromonas hydrophila subsp. hydrophila (strain ATCC 7966 / DSM 30187 / BCRC 13018 / CCUG 14551 / JCM 1027 / KCTC 2358 / NCIMB 9240 / NCTC 8049)).